A 422-amino-acid polypeptide reads, in one-letter code: Synaptotagmin-2 (422 aa).

The segment at methionine 1–glutamine 43 is disordered. Residues methionine 1–lysine 60 lie on the Vesicular side of the membrane. A compositionally biased stretch (low complexity) spans alanine 14 to alanine 30. Residues aspartate 31–glycine 40 show a composition bias toward polar residues. An N-linked (GlcNAc...) asparagine glycan is attached at asparagine 32. Residues isoleucine 61–cysteine 87 form a helical membrane-spanning segment. The Cytoplasmic segment spans residues lysine 88 to lysine 422. A disordered region spans residues glycine 102–glutamate 141. Over residues aspartate 119 to glutamate 139 the composition is skewed to acidic residues. Residues threonine 125 and threonine 128 each carry the phosphothreonine modification. The tract at residues glutamate 136–asparagine 382 is phospholipid binding. C2 domains are found at residues asparagine 142–arginine 261 and lysine 273–histidine 406. Ca(2+)-binding residues include leucine 172, aspartate 173, and aspartate 179. Threonine 202 is modified (phosphothreonine). Position 230 is a phosphotyrosine (tyrosine 230). Positions 231, 232, 233, 236, 237, 239, 304, 310, 364, and 366 each coordinate Ca(2+). Threonine 386 is subject to Phosphothreonine.

Belongs to the synaptotagmin family. In terms of assembly, homotetramer. Heterodimer; heterodimerizes with SYT1 in presence of calcium. Interacts with SCAMP5. Interacts with STON2. Interacts with PRRT2. As to quaternary structure, (Microbial infection) Interacts with C.botulinum neurotoxin type B (BoNT/B, botB). (Microbial infection) Interacts with C.botulinum neurotoxin type G (BoNT/G, botG). The cofactor is Ca(2+). Post-translationally, phosphorylation at Thr-202 by WNK1, changes the calcium requirement for SYT2-binding to phospholipid membranes.

It is found in the cytoplasmic vesicle. It localises to the secretory vesicle. The protein localises to the synaptic vesicle membrane. The protein resides in the chromaffin granule membrane. Its subcellular location is the cytoplasm. Exhibits calcium-dependent phospholipid and inositol polyphosphate binding properties. May have a regulatory role in the membrane interactions during trafficking of synaptic vesicles at the active zone of the synapse. Plays a role in dendrite formation by melanocytes. Its function is as follows. (Microbial infection) Receptor for C.botulinum neurotoxin type B (BoNT/B, botB); interaction is improved in the presence of gangliosides. The toxin binds via the vesicular domain (residues 47-60). Functionally, (Microbial infection) Receptor for C.botulinum neurotoxin type G (BoNT/G, botG); gangliosides are not required for (or only very slightly improve) binding to a membrane-anchored receptor fragment. The toxin binds via the vesicular domain (residues 47-55). The protein is Synaptotagmin-2 of Mus musculus (Mouse).